Consider the following 154-residue polypeptide: Large ribosomal subunit protein uL15 (154 aa).

Over residues methionine 1 to arginine 13 the composition is skewed to basic and acidic residues. The interval methionine 1–glycine 52 is disordered.

Belongs to the universal ribosomal protein uL15 family. Part of the 50S ribosomal subunit.

In terms of biological role, binds to the 23S rRNA. This chain is Large ribosomal subunit protein uL15, found in Deinococcus deserti (strain DSM 17065 / CIP 109153 / LMG 22923 / VCD115).